The primary structure comprises 412 residues: 1-deoxy-D-xylulose 5-phosphate reductoisomerase (412 aa).

The NADPH site is built by threonine 5, glycine 6, serine 7, isoleucine 8, glycine 31, arginine 32, asparagine 33, and asparagine 125. 1-deoxy-D-xylulose 5-phosphate is bound at residue lysine 126. Glutamate 127 contacts NADPH. Mn(2+) is bound at residue aspartate 151. Residues serine 152, glutamate 153, serine 189, and histidine 212 each contribute to the 1-deoxy-D-xylulose 5-phosphate site. Mn(2+) is bound at residue glutamate 153. NADPH is bound at residue glycine 218. Residues serine 225, asparagine 230, lysine 231, and glutamate 234 each contribute to the 1-deoxy-D-xylulose 5-phosphate site. Residue glutamate 234 participates in Mn(2+) binding.

It belongs to the DXR family. It depends on Mg(2+) as a cofactor. Mn(2+) serves as cofactor.

The catalysed reaction is 2-C-methyl-D-erythritol 4-phosphate + NADP(+) = 1-deoxy-D-xylulose 5-phosphate + NADPH + H(+). Its pathway is isoprenoid biosynthesis; isopentenyl diphosphate biosynthesis via DXP pathway; isopentenyl diphosphate from 1-deoxy-D-xylulose 5-phosphate: step 1/6. Catalyzes the NADPH-dependent rearrangement and reduction of 1-deoxy-D-xylulose-5-phosphate (DXP) to 2-C-methyl-D-erythritol 4-phosphate (MEP). This is 1-deoxy-D-xylulose 5-phosphate reductoisomerase from Prochlorococcus marinus (strain SARG / CCMP1375 / SS120).